The primary structure comprises 206 residues: MARYLGPKLKLSRREGTDLFLKSGVRAIDTKCKIEQAPGQHGARKPRLSDYGVQLREKQKVRRIYGVLERQFRNYYKEAARLKGNTGENLLALLEGRLDNVVYRMGFGATRAEARQLVSHKAIMVNGRVVNIASYQVSPNDVVSVREKAKKQSRVKAALELAEQREKPTWLEVDAGKMEGTFKRKPERTDLSADINEHLIVELYSK.

Residues 96-156 (GRLDNVVYRM…EKAKKQSRVK (61 aa)) enclose the S4 RNA-binding domain.

This sequence belongs to the universal ribosomal protein uS4 family. In terms of assembly, part of the 30S ribosomal subunit. Contacts protein S5. The interaction surface between S4 and S5 is involved in control of translational fidelity.

One of the primary rRNA binding proteins, it binds directly to 16S rRNA where it nucleates assembly of the body of the 30S subunit. Its function is as follows. With S5 and S12 plays an important role in translational accuracy. The chain is Small ribosomal subunit protein uS4 from Cronobacter sakazakii (strain ATCC BAA-894) (Enterobacter sakazakii).